Here is a 434-residue protein sequence, read N- to C-terminus: Pyrichalasin H cluster regulator BC2 (434 aa).

Disordered regions lie at residues 297-321 and 362-383; these read GSSP…CSPL and HPGH…RLSH. Polar residues predominate over residues 298–309; the sequence is SSPSGTPESELT. Positions 362-380 are enriched in basic and acidic residues; that stretch reads HPGHEDHQQQQEEVKQHDR.

The protein localises to the nucleus. In terms of biological role, transcription factor probably involved in regulation of gene cluster that mediates the biosynthesis of a tyrosine-derived cytochalasan acting as a fungal signal recognized by resistant rice plants and leads to avirulence in Pi33 resistant rice cultivars. This is Pyrichalasin H cluster regulator BC2 from Pyricularia oryzae (strain 70-15 / ATCC MYA-4617 / FGSC 8958) (Rice blast fungus).